The sequence spans 268 residues: Ribonuclease P protein subunit p30 (268 aa).

A2 carries the post-translational modification N-acetylalanine. Position 251 is a phosphoserine (S251).

It belongs to the eukaryotic/archaeal RNase P protein component 3 family. In terms of assembly, component of nuclear RNase P and RNase MRP ribonucleoproteins. RNase P consists of a catalytic RNA moiety and about 10 protein subunits; POP1, POP4, POP5, POP7, RPP14, RPP21, RPP25, RPP30, RPP38 and RPP40. Within the RNase P complex, POP1, POP7 and RPP25 form the 'finger' subcomplex, POP5, RPP14, RPP40 and homodimeric RPP30 form the 'palm' subcomplex, and RPP21, POP4 and RPP38 form the 'wrist' subcomplex. All subunits of the RNase P complex interact with the catalytic RNA. Several subunits of RNase P are also part of the RNase MRP complex. RNase MRP consists of a catalytic RNA moiety and about 8 protein subunits; POP1, POP7, RPP25, RPP30, RPP38, RPP40 and possibly also POP4 and POP5.

It is found in the nucleus. The protein resides in the nucleolus. Component of ribonuclease P, a ribonucleoprotein complex that generates mature tRNA molecules by cleaving their 5'-ends. Also a component of the MRP ribonuclease complex, which cleaves pre-rRNA sequences. This chain is Ribonuclease P protein subunit p30 (Rpp30), found in Mus musculus (Mouse).